Here is a 175-residue protein sequence, read N- to C-terminus: Mating-type protein ALPHA1 (175 aa).

The segment at residues 88–144 (SSKKYLNSFMAFRAYYSQFGSGVKQNVLSSLLAEEWHADKMQHGIWDYFAQQYNFIN) is a DNA-binding region (alpha box).

It belongs to the MATALPHA1 family. As to quaternary structure, binds DNA with a high specificity in complex with an MCM1 dimer. Interacts with STE12.

It localises to the nucleus. Its function is as follows. Mating type proteins are sequence specific DNA-binding proteins that act as master switches in yeast differentiation by controlling gene expression in a cell type-specific fashion. Transcriptional coactivator that, in alpha-cells, binds cooperatively with MCM1 and STE12 to a DNA sequence termed the QP' element, to activate the transcription of alpha-specific genes. This is Mating-type protein ALPHA1 (MATALPHA1) from Saccharomyces cerevisiae (strain ATCC 204508 / S288c) (Baker's yeast).